Consider the following 96-residue polypeptide: Citrate lyase acyl carrier protein (96 aa).

Residue Ser14 is modified to O-(phosphoribosyl dephospho-coenzyme A)serine.

The protein belongs to the CitD family. Oligomer with a subunit composition of (alpha,beta,gamma)6.

Its subcellular location is the cytoplasm. In terms of biological role, covalent carrier of the coenzyme of citrate lyase. In Lactiplantibacillus plantarum (strain ATCC BAA-793 / NCIMB 8826 / WCFS1) (Lactobacillus plantarum), this protein is Citrate lyase acyl carrier protein.